We begin with the raw amino-acid sequence, 308 residues long: Cap-specific mRNA (nucleoside-2'-O-)-methyltransferase (308 aa).

Y30 lines the mRNA pocket. Q46, Y74, G76, G80, D103, R105, V124, and D147 together coordinate S-adenosyl-L-methionine. The segment at 177 to 257 (PIASSLKWRC…NTKIRPKIVL (81 aa)) is binding to NPH-I. K183 acts as the For methyltransferase activity in catalysis. Residues 185–188 (RCPF), D190, 213–215 (SAE), and E241 each bind mRNA.

The protein belongs to the class I-like SAM-binding methyltransferase superfamily. Poxvirus/kinetoplastid 2'-O-MTase family. In terms of assembly, interacts with poly(A) polymerase catalytic subunit OPG063. Interacts with OPG109 and OPG123; these interactions might help linking transcription to capping and polyadenylation.

It is found in the virion. It carries out the reaction a 5'-end (N(7)-methyl 5'-triphosphoguanosine)-ribonucleoside in mRNA + S-adenosyl-L-methionine = a 5'-end (N(7)-methyl 5'-triphosphoguanosine)-(2'-O-methyl-ribonucleoside) in mRNA + S-adenosyl-L-homocysteine + H(+). In terms of biological role, displays methyltransferase, positive regulation of the poly(A) polymerase and transcription elongation activities. Involved in the modification of both mRNA ends and in intermediate and late gene positive transcription elongation. At the mRNAs 5' end, methylates the ribose 2' OH group of the first transcribed nucleotide, thereby producing a 2'-O-methylpurine cap. At the 3' end, functions as a processivity factor which stimulates the activity of the viral poly(A) polymerase OPG063 that creates mRNA's poly(A) tail. In the presence of OPG102, OPG063 does not dissociate from the RNA allowing tail elongation to around 250 adenylates. This is Cap-specific mRNA (nucleoside-2'-O-)-methyltransferase (OPG102) from Fowlpox virus (strain NVSL) (FPV).